Reading from the N-terminus, the 512-residue chain is 2-isopropylmalate synthase (512 aa).

One can recognise a Pyruvate carboxyltransferase domain in the interval 5–268 (LIIFDTTLRD…DIGIDTQQIL (264 aa)). Positions 14, 202, 204, and 239 each coordinate Mn(2+). The interval 394–512 (GFVSLSQHSE…SKADRVAAQG (119 aa)) is regulatory domain.

The protein belongs to the alpha-IPM synthase/homocitrate synthase family. LeuA type 1 subfamily. As to quaternary structure, homodimer. The cofactor is Mn(2+).

The protein localises to the cytoplasm. The enzyme catalyses 3-methyl-2-oxobutanoate + acetyl-CoA + H2O = (2S)-2-isopropylmalate + CoA + H(+). Its pathway is amino-acid biosynthesis; L-leucine biosynthesis; L-leucine from 3-methyl-2-oxobutanoate: step 1/4. In terms of biological role, catalyzes the condensation of the acetyl group of acetyl-CoA with 3-methyl-2-oxobutanoate (2-ketoisovalerate) to form 3-carboxy-3-hydroxy-4-methylpentanoate (2-isopropylmalate). This Polaromonas naphthalenivorans (strain CJ2) protein is 2-isopropylmalate synthase.